Here is a 292-residue protein sequence, read N- to C-terminus: Glycinyltransferase (292 aa).

This sequence belongs to the thymidine aminotransferase family.

The enzyme catalyses 5-phosphomethyl-dUMP in DNA + glycine = 5-N(alpha)-glycyl-dTMP in DNA + phosphate. Its function is as follows. Transfers glycine to 5-phosphomethyl-2'-deoxyuridine (5-PmdU) to produce 5-Nalpha-glycinylthymidine (Nalpha-GlyT) on DNA as a step in the pathway leading to thymidine hypermodifications in the viral genome. As a final result of the pathway of hypermodification, 5-acetylaminomethyl-2'-deoxyuridine (5-AcNmdU) substitutes for a subset of thymidines in the viral DNA. These modifications probably prevent degradation of viral genome by the host restriction-modification antiviral defense system. In Pseudomonas phage PaMx11, this protein is Glycinyltransferase.